Here is a 241-residue protein sequence, read N- to C-terminus: Orotidine 5'-phosphate decarboxylase (241 aa).

Substrate contacts are provided by residues Asp-16, Lys-37, Asp-64–Thr-73, Thr-128, Arg-190, Gln-199, Gly-219, and Arg-220. Lys-66 acts as the Proton donor in catalysis.

This sequence belongs to the OMP decarboxylase family. Type 1 subfamily. As to quaternary structure, homodimer.

The catalysed reaction is orotidine 5'-phosphate + H(+) = UMP + CO2. The protein operates within pyrimidine metabolism; UMP biosynthesis via de novo pathway; UMP from orotate: step 2/2. Catalyzes the decarboxylation of orotidine 5'-monophosphate (OMP) to uridine 5'-monophosphate (UMP). The chain is Orotidine 5'-phosphate decarboxylase from Prochlorococcus marinus (strain NATL1A).